The primary structure comprises 1098 residues: Sister-chromatid cohesion protein 3 (1098 aa).

The disordered stretch occupies residues Met-1 to Asn-68. Residues Arg-245–Asp-265 are a coiled coil. The SCD domain maps to Phe-275–Met-360. Coiled coils occupy residues Lys-632–Asp-653, Leu-888–Glu-908, and Leu-1009–Arg-1032. Residues Glu-1027–Leu-1077 form a disordered region. Basic and acidic residues predominate over residues Arg-1040 to Asp-1050.

This sequence belongs to the SCC3 family. As to quaternary structure, part of the cohesin complex. Interacts with DEK3. As to expression, expressed in roots, mature leaves, buds and seedlings.

The protein localises to the nucleus. The protein resides in the chromosome. Its function is as follows. Essential component of cohesin complex, a complex required for the cohesion of sister chromatids after DNA replication. The cohesin complex apparently forms a large proteinaceous ring within which sister chromatids can be trapped. At anaphase, the complex is cleaved and dissociates from chromatin, allowing sister chromatids to segregate. The cohesin complex may also play a role in spindle pole assembly during mitosis. Required for centromere cohesion maintenance at anaphase I and for the monopolar orientation of the kinetochores during both male and female meiosis. Also involved in mitosis. The chain is Sister-chromatid cohesion protein 3 from Arabidopsis thaliana (Mouse-ear cress).